A 505-amino-acid polypeptide reads, in one-letter code: ATP synthase subunit alpha (505 aa).

170–177 (GDRQTGKS) provides a ligand contact to ATP.

This sequence belongs to the ATPase alpha/beta chains family. F-type ATPases have 2 components, CF(1) - the catalytic core - and CF(0) - the membrane proton channel. CF(1) has five subunits: alpha(3), beta(3), gamma(1), delta(1), epsilon(1). CF(0) has four main subunits: a(1), b(1), b'(1) and c(9-12).

Its subcellular location is the cellular thylakoid membrane. It carries out the reaction ATP + H2O + 4 H(+)(in) = ADP + phosphate + 5 H(+)(out). Its function is as follows. Produces ATP from ADP in the presence of a proton gradient across the membrane. The alpha chain is a regulatory subunit. In Prochlorococcus marinus (strain AS9601), this protein is ATP synthase subunit alpha.